The chain runs to 1436 residues: ABC transporter C family member 15 (1436 aa).

7 helical membrane passes run 8 to 28 (IINK…IYLY), 129 to 149 (YIAT…PLIL), 165 to 185 (IYIG…NMAS), 238 to 258 (FFQY…IQIL), 261 to 281 (LGFL…VMLI), 349 to 369 (IIYW…VLVS), and 373 to 393 (TYTL…ITIL). The ABC transmembrane type-1 1 domain occupies 128-412 (NYIATGLFVF…LPDCLHKFIS (285 aa)). An ABC transporter 1 domain is found at 543–766 (ADYQDLLSIN…IDFEMILKEK (224 aa)). 575 to 582 (GGVRSGKT) is a binding site for ATP. The region spanning 865–1155 (KKYIRMGSSI…FMRQFGELES (291 aa)) is the ABC transmembrane type-1 2 domain. 6 helical membrane passes run 873–893 (SISF…ILLL), 919–939 (LIYL…YLLI), 985–1005 (IDIL…CLVT), 1017–1039 (IAIP…NYSV), 1101–1121 (IGIR…LFSI), and 1127–1147 (GLSA…NWFM). In terms of domain architecture, ABC transporter 2 spans 1193-1426 (IEFKNVEIRY…STSRFSKLIK (234 aa)). 1227 to 1234 (GRSGSGKS) is a binding site for ATP.

It belongs to the ABC transporter superfamily. ABCC family. Conjugate transporter (TC 3.A.1.208) subfamily.

It localises to the membrane. This chain is ABC transporter C family member 15 (abcC15), found in Dictyostelium discoideum (Social amoeba).